The chain runs to 247 residues: ATP synthase subunit a, chloroplastic (247 aa).

5 helical membrane passes run 38-58 (QVLI…VIAV), 95-115 (VPFI…GALL), 134-154 (INTT…AGLS), 199-219 (LVVV…VMFL), and 220-240 (GLFT…AYIG).

The protein belongs to the ATPase A chain family. F-type ATPases have 2 components, CF(1) - the catalytic core - and CF(0) - the membrane proton channel. CF(1) has five subunits: alpha(3), beta(3), gamma(1), delta(1), epsilon(1). CF(0) has four main subunits: a, b, b' and c.

The protein localises to the plastid. Its subcellular location is the chloroplast thylakoid membrane. Its function is as follows. Key component of the proton channel; it plays a direct role in the translocation of protons across the membrane. The polypeptide is ATP synthase subunit a, chloroplastic (Hordeum vulgare (Barley)).